A 275-amino-acid chain; its full sequence is Phosphate import ATP-binding protein PstB 3 (275 aa).

A disordered region spans residues 1–26 (MATQETDDSLISTDVQTDATERGDQP). Over residues 9–18 (SLISTDVQTD) the composition is skewed to polar residues. One can recognise an ABC transporter domain in the interval 31 to 270 (VETKHLDVHY…PEDDRVEDYI (240 aa)). 63–70 (GPSGCGKS) lines the ATP pocket.

This sequence belongs to the ABC transporter superfamily. Phosphate importer (TC 3.A.1.7) family. In terms of assembly, the complex is composed of two ATP-binding proteins (PstB), two transmembrane proteins (PstC and PstA) and a solute-binding protein (PstS).

The protein localises to the cell membrane. The enzyme catalyses phosphate(out) + ATP + H2O = ADP + 2 phosphate(in) + H(+). Part of the ABC transporter complex PstSACB involved in phosphate import. Responsible for energy coupling to the transport system. This chain is Phosphate import ATP-binding protein PstB 3, found in Natronomonas pharaonis (strain ATCC 35678 / DSM 2160 / CIP 103997 / JCM 8858 / NBRC 14720 / NCIMB 2260 / Gabara) (Halobacterium pharaonis).